We begin with the raw amino-acid sequence, 274 residues long: Rhamnulose-1-phosphate aldolase (274 aa).

Glu117 is a catalytic residue. Residues His141, His143, and His212 each coordinate Zn(2+).

This sequence belongs to the aldolase class II family. RhaD subfamily. Homotetramer. The cofactor is Zn(2+).

The protein resides in the cytoplasm. The catalysed reaction is L-rhamnulose 1-phosphate = (S)-lactaldehyde + dihydroxyacetone phosphate. The protein operates within carbohydrate degradation; L-rhamnose degradation; glycerone phosphate from L-rhamnose: step 3/3. Catalyzes the reversible cleavage of L-rhamnulose-1-phosphate to dihydroxyacetone phosphate (DHAP) and L-lactaldehyde. In Pectobacterium atrosepticum (strain SCRI 1043 / ATCC BAA-672) (Erwinia carotovora subsp. atroseptica), this protein is Rhamnulose-1-phosphate aldolase.